Reading from the N-terminus, the 384-residue chain is PqqA peptide cyclase (384 aa).

The Radical SAM core domain maps to 5–220 (VGLPLWLLAE…TNEYREKLKA (216 aa)). [4Fe-4S] cluster contacts are provided by C19, C23, and C26.

This sequence belongs to the radical SAM superfamily. PqqE family. Interacts with PqqD. The interaction is necessary for activity of PqqE. [4Fe-4S] cluster is required as a cofactor.

The catalysed reaction is [PQQ precursor protein] + S-adenosyl-L-methionine = E-Y cross-linked-[PQQ precursor protein] + 5'-deoxyadenosine + L-methionine + H(+). It functions in the pathway cofactor biosynthesis; pyrroloquinoline quinone biosynthesis. Its function is as follows. Catalyzes the cross-linking of a glutamate residue and a tyrosine residue in the PqqA protein as part of the biosynthesis of pyrroloquinoline quinone (PQQ). The polypeptide is PqqA peptide cyclase (Acinetobacter baumannii (strain SDF)).